A 305-amino-acid chain; its full sequence is Transcriptional activator protein PfeR (305 aa).

Residues 79 to 192 enclose the Response regulatory domain; sequence RLLLVEDDPR…ELDARTDALL (114 aa). Aspartate 128 is subject to 4-aspartylphosphate. A DNA-binding region (ompR/PhoB-type) is located at residues 200-301; the sequence is LPLAQRRDTR…VRGQGYLLVE (102 aa).

In terms of processing, phosphorylated by PfeS.

The protein resides in the cytoplasm. Functionally, member of the two-component regulatory system PfeR/PfeS. Activates expression of the ferric enterobactin receptor. The sequence is that of Transcriptional activator protein PfeR (pfeR) from Pseudomonas aeruginosa (strain ATCC 15692 / DSM 22644 / CIP 104116 / JCM 14847 / LMG 12228 / 1C / PRS 101 / PAO1).